Reading from the N-terminus, the 456-residue chain is Probable galactarate/D-glucarate transporter GudP (456 aa).

Helical transmembrane passes span 11–31 (YLIL…RATI), 51–71 (YIFS…GWLL), 78–96 (KVYA…LQGY), 102–119 (ISTA…VGLA), 246–266 (IYLG…WFPV), 280–300 (GIIA…GGVI), 317–337 (TPIV…YVDA), 341–361 (VVCF…GWAV), 381–401 (FGNL…AATG), and 408–428 (SSWV…VGEI).

This sequence belongs to the major facilitator superfamily. Phthalate permease family.

It is found in the cell inner membrane. The enzyme catalyses galactarate(in) + H(+)(in) = galactarate(out) + H(+)(out). The catalysed reaction is D-glucarate(in) + H(+)(in) = D-glucarate(out) + H(+)(out). Probably involved in the uptake of galactarate and/or D-glucarate. The protein is Probable galactarate/D-glucarate transporter GudP (gudP) of Pseudomonas putida (Arthrobacter siderocapsulatus).